The following is a 434-amino-acid chain: Trigger factor (434 aa).

Residues 160–245 (GDKAKINFVG…LNEVQAANLP (86 aa)) enclose the PPIase FKBP-type domain.

The protein belongs to the FKBP-type PPIase family. Tig subfamily.

It is found in the cytoplasm. It catalyses the reaction [protein]-peptidylproline (omega=180) = [protein]-peptidylproline (omega=0). In terms of biological role, involved in protein export. Acts as a chaperone by maintaining the newly synthesized protein in an open conformation. Functions as a peptidyl-prolyl cis-trans isomerase. The polypeptide is Trigger factor (Shewanella halifaxensis (strain HAW-EB4)).